A 100-amino-acid chain; its full sequence is Urease subunit gamma (100 aa).

This sequence belongs to the urease gamma subunit family. Heterotrimer of UreA (gamma), UreB (beta) and UreC (alpha) subunits. Three heterotrimers associate to form the active enzyme.

It is found in the cytoplasm. The catalysed reaction is urea + 2 H2O + H(+) = hydrogencarbonate + 2 NH4(+). It participates in nitrogen metabolism; urea degradation; CO(2) and NH(3) from urea (urease route): step 1/1. This is Urease subunit gamma from Saccharophagus degradans (strain 2-40 / ATCC 43961 / DSM 17024).